The chain runs to 737 residues: MEDAGEDPTTFAAHSLPSDPRLLATVTNAYLGTRVFHDTLHVSGVYNGAGGDTHRAMLPSPLNVRLEAPAGMGEQLTETFALDTNTGSFLHTLEGPRFRASQCIYAHRTLPHVLAFRVSIARLAPGSGPITLLLRSAFSPESPDLDLHQGPDFQGARYLYGHTLTPEQPGGPQQEVHMLWTPAPPDLTLGEGEEARTWDFLTAVGGSQAEAQACLTEALQLQARGALYTAHAQAWAQLWVECGLDVVGPLQLRQALRGSLYYLLSALPQPKAPGYICHGLSPGGLSNGSREECYWGHVFWDQDLWMFPSILMFHPEAARAILEYRIRTLDGALENAQNLGYQGAKFAWESADSGLEVCPEDIYGVQEVHVNGAVVLAFELYYHTTQDLQLFREAGGWDVVRAVAEFWCSRVEWSPREEKYHLRGVMSPDEYHSGVNNSVYTNVLVQNSLRFAAALAQDLGLPIPSQWLAVADKIKVPFDVEQNFHPEFDGYEPGEVVKQADVVLLGYPVPFSLSPDVRRKNLEIYEAVTSPQGPAMTWSMFAVGWMELKDAVRARGLLDRSFANMAEPFKVWTENADGSGAVNFLTGMGGFLQAVVFGCTGFRVTRAGVTFDPVCLSGISRVSVSGIFYQGNKLNFSFSEDSVTVEVTARAGPWAPHLEAELWPSQSRLSLLPGHKVSFPRSAGRIQMSPPKLPGSSSSEFPGRTFSDVRDPLQSPLWVTLGSSSPTESLTVDPASE.

300–301 serves as a coordination point for substrate; that stretch reads WD. The active-site Proton donor is the Glu-430. Residue 498–499 participates in substrate binding; sequence KQ. The disordered stretch occupies residues 681 to 737; it reads RSAGRIQMSPPKLPGSSSSEFPGRTFSDVRDPLQSPLWVTLGSSSPTESLTVDPASE. Residues 721 to 730 show a composition bias toward polar residues; it reads LGSSSPTESL.

Belongs to the glycosyl hydrolase 65 family.

It carries out the reaction (5R)-5-O-[alpha-D-glucosyl-(1-&gt;2)-beta-D-galactosyl]-5-hydroxy-L-lysyl-[collagen] + H2O = (5R)-5-O-(beta-D-galactosyl)-5-hydroxy-L-lysyl-[collagen] + D-glucose. Its function is as follows. Catalyzes the hydrolysis of glucose from the disaccharide unit linked to hydroxylysine residues of collagen and collagen-like proteins. In Homo sapiens (Human), this protein is Protein-glucosylgalactosylhydroxylysine glucosidase.